The primary structure comprises 733 residues: Cell division cycle protein 48 homolog AF_1297 (733 aa).

ATP-binding positions include Gly223–Thr230 and Gly496–Thr503.

This sequence belongs to the AAA ATPase family. CDC48 subfamily.

In Archaeoglobus fulgidus (strain ATCC 49558 / DSM 4304 / JCM 9628 / NBRC 100126 / VC-16), this protein is Cell division cycle protein 48 homolog AF_1297.